We begin with the raw amino-acid sequence, 93 residues long: Protein S100-A8 (93 aa).

EF-hand domains lie at 12-47 (IIDVYHKYSLIKGNFHAVYRDDLKKLLETECPQYIR) and 46-81 (IRKKGADVWFKELDINTDGAVNFQEFLILVIKMGVA). The Zn(2+) site is built by His17 and His27. Asp33 is a Ca(2+) binding site. Cys42 is subject to S-nitrosocysteine. Ca(2+) contacts are provided by Asp59, Asn61, Asp63, and Glu70. Residues His83 and His87 each contribute to the Zn(2+) site.

Belongs to the S-100 family. In terms of assembly, homodimer. Preferentially exists as a heterodimer or heterotetramer with S100A9 known as calprotectin (S100A8/A9). S100A8 interacts with AGER, ATP2A2 and with the heterodimeric complex formed by TLR4 and LY96. Interacts with GAPDH. Calprotectin (S100A8/9) interacts with CEACAM3 and tubulin filaments in a calcium-dependent manner. Heterotetrameric calprotectin (S100A8/A9) interacts with ANXA6 and associates with tubulin filaments in activated monocytes. S100A8 and calprotectin (S100A8/9) interact with NCF2/P67PHOX, RAC1 and RAC2. Calprotectin (S100A8/9) interacts with CYBA and CYBB. Calprotectin (S100A8/9) interacts with NOS2 to form the iNOS-S100A8/A9 transnitrosylase complex; induced by LDL(ox). Calprotectin (S100A8/9) interacts with CD69. As to expression, calprotectin (S100A8/9) is predominantly expressed in myeloid cells. Except for inflammatory conditions, the expression is restricted to a specific stage of myeloid differentiation since both proteins are expressed in circulating neutrophils and monocytes but are absent in normal tissue macrophages and lymphocytes. Under chronic inflammatory conditions, such as psoriasis and malignant disorders, also expressed in the epidermis. Found in high concentrations at local sites of inflammation or in the serum of patients with inflammatory diseases such as rheumatoid, cystic fibrosis, inflammatory bowel disease, Crohn's disease, giant cell arteritis, cystic fibrosis, Sjogren's syndrome, systemic lupus erythematosus, and progressive systemic sclerosis. Involved in the formation and deposition of amyloids in the aging prostate known as corpora amylacea inclusions. Strongly up-regulated in many tumors, including gastric, esophageal, colon, pancreatic, bladder, ovarian, thyroid, breast and skin cancers.

Its subcellular location is the secreted. It is found in the cytoplasm. The protein resides in the cytoskeleton. The protein localises to the cell membrane. With respect to regulation, calprotectin (S100A8/A9) activity on TLR4 signaling is inhibited by paquinimod. Functionally, S100A8 is a calcium- and zinc-binding protein which plays a prominent role in the regulation of inflammatory processes and immune response. It can induce neutrophil chemotaxis and adhesion. Predominantly found as calprotectin (S100A8/A9) which has a wide plethora of intra- and extracellular functions. The intracellular functions include: facilitating leukocyte arachidonic acid trafficking and metabolism, modulation of the tubulin-dependent cytoskeleton during migration of phagocytes and activation of the neutrophilic NADPH-oxidase. Also participates in regulatory T-cell differentiation together with CD69. Activates NADPH-oxidase by facilitating the enzyme complex assembly at the cell membrane, transferring arachidonic acid, an essential cofactor, to the enzyme complex and S100A8 contributes to the enzyme assembly by directly binding to NCF2/P67PHOX. The extracellular functions involve pro-inflammatory, antimicrobial, oxidant-scavenging and apoptosis-inducing activities. Its pro-inflammatory activity includes recruitment of leukocytes, promotion of cytokine and chemokine production, and regulation of leukocyte adhesion and migration. Acts as an alarmin or a danger associated molecular pattern (DAMP) molecule and stimulates innate immune cells via binding to pattern recognition receptors such as Toll-like receptor 4 (TLR4) and receptor for advanced glycation endproducts (AGER). Binding to TLR4 and AGER activates the MAP-kinase and NF-kappa-B signaling pathways resulting in the amplification of the pro-inflammatory cascade. Has antimicrobial activity towards bacteria and fungi and exerts its antimicrobial activity probably via chelation of Zn(2+) which is essential for microbial growth. Can induce cell death via autophagy and apoptosis and this occurs through the cross-talk of mitochondria and lysosomes via reactive oxygen species (ROS) and the process involves BNIP3. Can regulate neutrophil number and apoptosis by an anti-apoptotic effect; regulates cell survival via ITGAM/ITGB and TLR4 and a signaling mechanism involving MEK-ERK. Its role as an oxidant scavenger has a protective role in preventing exaggerated tissue damage by scavenging oxidants. Can act as a potent amplifier of inflammation in autoimmunity as well as in cancer development and tumor spread. The iNOS-S100A8/A9 transnitrosylase complex directs selective inflammatory stimulus-dependent S-nitrosylation of GAPDH and probably multiple targets such as ANXA5, EZR, MSN and VIM by recognizing a [IL]-x-C-x-x-[DE] motif; S100A8 seems to contribute to S-nitrosylation site selectivity. (Microbial infection) Upon infection by human coronavirus SARS-CoV-2, may induce expansion of aberrant immature neutrophils in a TLR4-dependent manner. The chain is Protein S100-A8 from Homo sapiens (Human).